A 535-amino-acid chain; its full sequence is Protoheme IX farnesyltransferase (535 aa).

The segment at 1 to 263 is unknown; it reads MRRENARVVA…DYVSLTKPGV (263 aa). The next 14 helical transmembrane spans lie at 18–38, 40–60, 83–103, 127–147, 163–183, 197–217, 262–282, 285–305, 334–354, 357–377, 385–405, 412–432, 474–494, and 509–529; these read WMVI…SIIP, MTGA…LAMY, YLTL…AGAL, WPAL…AALA, VACA…QVLL, LTHL…VTLA, GVIS…PAGI, WSLV…SHSI, HALA…AIFV, LTAL…TIWL, IVIG…AVTG, LLLW…LALI, LLGM…GLFL, and AWAL…AMVV. The segment at 264–535 is protoheme IX prenyltransferase; the sequence is ISLLILTTIT…AMVVDRAVFA (272 aa).

This sequence in the C-terminal section; belongs to the UbiA prenyltransferase family. Protoheme IX farnesyltransferase subfamily.

It is found in the cell membrane. The enzyme catalyses heme b + (2E,6E)-farnesyl diphosphate + H2O = Fe(II)-heme o + diphosphate. The protein operates within porphyrin-containing compound metabolism; heme O biosynthesis; heme O from protoheme: step 1/1. In terms of biological role, converts heme B (protoheme IX) to heme O by substitution of the vinyl group on carbon 2 of heme B porphyrin ring with a hydroxyethyl farnesyl side group. This Roseiflexus castenholzii (strain DSM 13941 / HLO8) protein is Protoheme IX farnesyltransferase (ctaB).